The sequence spans 332 residues: Ornithine carbamoyltransferase, catabolic (332 aa).

Carbamoyl phosphate is bound by residues 60–63, Gln87, Arg111, and 138–141; these read STRT and HPTQ. L-ornithine is bound by residues Asn170, Asp230, and 234 to 235; that span reads SM. Carbamoyl phosphate is bound by residues 271–272 and Arg316; that span reads CL.

Belongs to the aspartate/ornithine carbamoyltransferase superfamily. OTCase family.

The protein localises to the cytoplasm. It carries out the reaction carbamoyl phosphate + L-ornithine = L-citrulline + phosphate + H(+). It functions in the pathway amino-acid degradation; L-arginine degradation via ADI pathway; carbamoyl phosphate from L-arginine: step 2/2. In terms of biological role, reversibly catalyzes the transfer of the carbamoyl group from carbamoyl phosphate (CP) to the N(epsilon) atom of ornithine (ORN) to produce L-citrulline. This is Ornithine carbamoyltransferase, catabolic from Bacillus thuringiensis subsp. konkukian (strain 97-27).